The primary structure comprises 575 residues: Delta-1-pyrroline-5-carboxylate dehydrogenase, mitochondrial (575 aa).

Residue 297 to 302 (GKIQSG) coordinates NAD(+). The Proton acceptor role is filled by Glu-317. Cys-351 (nucleophile) is an active-site residue.

The protein belongs to the aldehyde dehydrogenase family.

The protein localises to the mitochondrion inner membrane. It catalyses the reaction L-glutamate 5-semialdehyde + NAD(+) + H2O = L-glutamate + NADH + 2 H(+). Its pathway is amino-acid degradation; L-proline degradation into L-glutamate; L-glutamate from L-proline: step 2/2. This chain is Delta-1-pyrroline-5-carboxylate dehydrogenase, mitochondrial (PUT2), found in Saccharomyces cerevisiae (strain ATCC 204508 / S288c) (Baker's yeast).